A 227-amino-acid polypeptide reads, in one-letter code: Mediator of RNA polymerase II transcription subunit 18 (227 aa).

It belongs to the Mediator complex subunit 18 family. As to quaternary structure, component of the Mediator complex.

The protein resides in the nucleus. Component of the Mediator complex, a coactivator involved in the regulated transcription of nearly all RNA polymerase II-dependent genes. Mediator functions as a bridge to convey information from gene-specific regulatory proteins to the basal RNA polymerase II transcription machinery. Mediator is recruited to promoters by direct interactions with regulatory proteins and serves as a scaffold for the assembly of a functional preinitiation complex with RNA polymerase II and the general transcription factors. In Caenorhabditis briggsae, this protein is Mediator of RNA polymerase II transcription subunit 18 (mdt-18).